Consider the following 802-residue polypeptide: Penicillin G acylase (802 aa).

The signal sequence occupies residues 1 to 26 (MKMKWLISVIILFVFIFPQNLVFAGE). Ca(2+) is bound at residue glutamate 177. A propeptide spans 235 to 265 (SAVIKASEKVGKERENFVQSSEELGLPLKIG) (spacer peptide). The active-site Nucleophile is the serine 266. Residue aspartate 341 coordinates Ca(2+).

It belongs to the peptidase S45 family. As to quaternary structure, heterodimer of an alpha subunit and a beta subunit processed from the same precursor. Ca(2+) serves as cofactor.

It localises to the secreted. It catalyses the reaction a penicillin + H2O = 6-aminopenicillanate + a carboxylate. This Rhizobium viscosum (Arthrobacter viscosus) protein is Penicillin G acylase (pac).